The chain runs to 186 residues: Probable GTP-binding protein EngB (186 aa).

In terms of domain architecture, EngB-type G spans 18-186 (DKKEICFIGR…LKKLIGSVIL (169 aa)). Residues 26–33 (GRSNVGKS), 52–56 (GRTQL), 69–72 (DLPG), 135–138 (NKAD), and 166–168 (VSA) each bind GTP. Serine 33 and threonine 54 together coordinate Mg(2+).

This sequence belongs to the TRAFAC class TrmE-Era-EngA-EngB-Septin-like GTPase superfamily. EngB GTPase family. The cofactor is Mg(2+).

Functionally, necessary for normal cell division and for the maintenance of normal septation. The polypeptide is Probable GTP-binding protein EngB (Malacoplasma penetrans (strain HF-2) (Mycoplasma penetrans)).